An 807-amino-acid polypeptide reads, in one-letter code: Ecotropic viral integration site 5 ortholog (807 aa).

The segment at 1 to 31 (MTLTTTTTASSAESQAKMDVKGGALPGEENL) is disordered. Thr33 bears the Phosphothreonine mark. 2 positions are modified to phosphoserine: Ser58 and Ser64. The region spanning 116-300 (GIPHHFRAIV…RIMDVFLSEG (185 aa)) is the Rab-GAP TBC domain. Coiled-coil stretches lie at residues 352–463 (SIKL…ENNV), 494–583 (CLLE…ENQR), and 627–772 (REME…RGKF).

Interacts with Rab11.

Its subcellular location is the cytoplasm. It localises to the endosome. Its function is as follows. Functions as a GTPase-activating protein (GAP). During border cell migration in the ovary, acts as a GAP for Rab11 and is necessary for the maintenance of active receptor tyrosine kinases at the leading edge. The sequence is that of Ecotropic viral integration site 5 ortholog (Evi5) from Drosophila melanogaster (Fruit fly).